A 158-amino-acid chain; its full sequence is Phosphopantetheine adenylyltransferase (158 aa).

Ser9 is a binding site for substrate. Residues 9–10 (SF) and His17 contribute to the ATP site. Positions 41, 73, and 87 each coordinate substrate. ATP contacts are provided by residues 88–90 (GLR), Glu98, and 122–128 (NQNISSS).

Belongs to the bacterial CoaD family. In terms of assembly, homohexamer. Mg(2+) is required as a cofactor.

The protein localises to the cytoplasm. The catalysed reaction is (R)-4'-phosphopantetheine + ATP + H(+) = 3'-dephospho-CoA + diphosphate. It participates in cofactor biosynthesis; coenzyme A biosynthesis; CoA from (R)-pantothenate: step 4/5. Reversibly transfers an adenylyl group from ATP to 4'-phosphopantetheine, yielding dephospho-CoA (dPCoA) and pyrophosphate. This is Phosphopantetheine adenylyltransferase from Leuconostoc citreum (strain KM20).